A 201-amino-acid chain; its full sequence is Small ribosomal subunit protein uS4c (201 aa).

The segment at 15 to 44 is disordered; it reads LGALPGLTNKRPRAGSDLRNQSRSGKKSQY. The region spanning 89 to 149 is the S4 RNA-binding domain; sequence MRLDNILFRL…DEQKSRALIQ (61 aa).

Belongs to the universal ribosomal protein uS4 family. Part of the 30S ribosomal subunit. Contacts protein S5. The interaction surface between S4 and S5 is involved in control of translational fidelity.

It localises to the plastid. It is found in the chloroplast. In terms of biological role, one of the primary rRNA binding proteins, it binds directly to 16S rRNA where it nucleates assembly of the body of the 30S subunit. Its function is as follows. With S5 and S12 plays an important role in translational accuracy. In Helianthus annuus (Common sunflower), this protein is Small ribosomal subunit protein uS4c (rps4).